Consider the following 265-residue polypeptide: MLTFSFLTLFPELLAPFASEALVGKARARGLLDVQLVNMRDFAENKHLKVDDTPYGGGAGMVIRVDVVERALASLPPADEVILLTPAGERFTQQMAEELSRTTHLAFLCGRYEGFDARVERLATRELSLGDFVMMGGEAAAACVLEAVARLVPGVLGDEDSHRADSFSSGLLDYPEYTRPAEWRGEGVPEVLKGGNHAAVARWRREQALARTLARRPDLLPSAGLTPQDSAYLLTLGVTPEQLAAWGAPPPPLPKRRRGAKPNPN.

Residues G110 and 129–134 (LGDFVM) contribute to the S-adenosyl-L-methionine site. The tract at residues 243–265 (LAAWGAPPPPLPKRRRGAKPNPN) is disordered. Over residues 254–265 (PKRRRGAKPNPN) the composition is skewed to basic residues.

Belongs to the RNA methyltransferase TrmD family. As to quaternary structure, homodimer.

The protein localises to the cytoplasm. It catalyses the reaction guanosine(37) in tRNA + S-adenosyl-L-methionine = N(1)-methylguanosine(37) in tRNA + S-adenosyl-L-homocysteine + H(+). Its function is as follows. Specifically methylates guanosine-37 in various tRNAs. The protein is tRNA (guanine-N(1)-)-methyltransferase of Deinococcus geothermalis (strain DSM 11300 / CIP 105573 / AG-3a).